We begin with the raw amino-acid sequence, 490 residues long: Aspartyl/glutamyl-tRNA(Asn/Gln) amidotransferase subunit B (490 aa).

Belongs to the GatB/GatE family. GatB subfamily. Heterotrimer of A, B and C subunits.

It catalyses the reaction L-glutamyl-tRNA(Gln) + L-glutamine + ATP + H2O = L-glutaminyl-tRNA(Gln) + L-glutamate + ADP + phosphate + H(+). It carries out the reaction L-aspartyl-tRNA(Asn) + L-glutamine + ATP + H2O = L-asparaginyl-tRNA(Asn) + L-glutamate + ADP + phosphate + 2 H(+). Allows the formation of correctly charged Asn-tRNA(Asn) or Gln-tRNA(Gln) through the transamidation of misacylated Asp-tRNA(Asn) or Glu-tRNA(Gln) in organisms which lack either or both of asparaginyl-tRNA or glutaminyl-tRNA synthetases. The reaction takes place in the presence of glutamine and ATP through an activated phospho-Asp-tRNA(Asn) or phospho-Glu-tRNA(Gln). The polypeptide is Aspartyl/glutamyl-tRNA(Asn/Gln) amidotransferase subunit B (Prochlorococcus marinus (strain AS9601)).